We begin with the raw amino-acid sequence, 505 residues long: Deoxyguanosinetriphosphate triphosphohydrolase (505 aa).

The 208-residue stretch at 66-273 folds into the HD domain; sequence RLTHSMEVQQ…MEAADDISYC (208 aa).

The protein belongs to the dGTPase family. Type 1 subfamily. Homotetramer. Requires Mg(2+) as cofactor.

The catalysed reaction is dGTP + H2O = 2'-deoxyguanosine + triphosphate + H(+). Its function is as follows. dGTPase preferentially hydrolyzes dGTP over the other canonical NTPs. The chain is Deoxyguanosinetriphosphate triphosphohydrolase from Shigella boydii serotype 18 (strain CDC 3083-94 / BS512).